A 293-amino-acid chain; its full sequence is Exosome complex component RRP4 (293 aa).

Positions 1-20 are disordered; that stretch reads MALEMRLPKARKPLSESLGR. The 81-residue stretch at 79–159 folds into the S1 motif domain; sequence EVGDIVVGRI…SDGAVSLHTR (81 aa). A Phosphoserine modification is found at Ser124.

It belongs to the RRP4 family. In terms of assembly, component of the RNA exosome core complex (Exo-9), composed of EXOSC1, EXOSC2, EXOSC3, EXOSC4, EXOSC5, EXOSC6, EXOSC7, EXOSC8 and EXOSC9; within the complex interacts with EXOSC4 and EXOSC7. The catalytically inactive RNA exosome core complex (Exo-9) associates with the catalytic subunit EXOSC10/RRP6. Exo-9 may associate with DIS3 to form the nucleolar exosome complex, or DIS3L to form the cytoplasmic exosome complex. Exo-9 is formed by a hexameric base ring consisting of the heterodimers EXOSC4-EXOSC9, EXOSC5-EXOSC8 and EXOSC6-EXOSC7, and a cap ring consisting of EXOSC1, EXOSC2 and EXOSC3. The RNA exosome complex associates with cofactors C1D/RRP47, MPHOSPH6/MPP6 and MTREX/MTR4. Interacts with GTPBP1. Interacts with ZFP36L1 (via N-terminus).

Its subcellular location is the cytoplasm. It localises to the nucleus. The protein localises to the nucleolus. Non-catalytic component of the RNA exosome complex which has 3'-&gt;5' exoribonuclease activity and participates in a multitude of cellular RNA processing and degradation events. In the nucleus, the RNA exosome complex is involved in proper maturation of stable RNA species such as rRNA, snRNA and snoRNA, in the elimination of RNA processing by-products and non-coding 'pervasive' transcripts, such as antisense RNA species and promoter-upstream transcripts (PROMPTs), and of mRNAs with processing defects, thereby limiting or excluding their export to the cytoplasm. The RNA exosome may be involved in Ig class switch recombination (CSR) and/or Ig variable region somatic hypermutation (SHM) by targeting AICDA deamination activity to transcribed dsDNA substrates. In the cytoplasm, the RNA exosome complex is involved in general mRNA turnover and specifically degrades inherently unstable mRNAs containing AU-rich elements (AREs) within their 3' untranslated regions, and in RNA surveillance pathways, preventing translation of aberrant mRNAs. It seems to be involved in degradation of histone mRNA. The catalytic inactive RNA exosome core complex of 9 subunits (Exo-9) is proposed to play a pivotal role in the binding and presentation of RNA for ribonucleolysis, and to serve as a scaffold for the association with catalytic subunits and accessory proteins or complexes. EXOSC2 as peripheral part of the Exo-9 complex stabilizes the hexameric ring of RNase PH-domain subunits through contacts with EXOSC4 and EXOSC7. This is Exosome complex component RRP4 (Exosc2) from Mus musculus (Mouse).